A 429-amino-acid chain; its full sequence is Gamma-glutamyl phosphate reductase (429 aa).

It belongs to the gamma-glutamyl phosphate reductase family.

It localises to the cytoplasm. The enzyme catalyses L-glutamate 5-semialdehyde + phosphate + NADP(+) = L-glutamyl 5-phosphate + NADPH + H(+). It functions in the pathway amino-acid biosynthesis; L-proline biosynthesis; L-glutamate 5-semialdehyde from L-glutamate: step 2/2. Catalyzes the NADPH-dependent reduction of L-glutamate 5-phosphate into L-glutamate 5-semialdehyde and phosphate. The product spontaneously undergoes cyclization to form 1-pyrroline-5-carboxylate. The sequence is that of Gamma-glutamyl phosphate reductase from Methylocella silvestris (strain DSM 15510 / CIP 108128 / LMG 27833 / NCIMB 13906 / BL2).